Reading from the N-terminus, the 361-residue chain is Molybdopterin synthase catalytic subunit (361 aa).

Residues 101-102 (HR), lysine 117, and 124-126 (KKE) each bind substrate.

It belongs to the MoaE family. MOCS2B subfamily. Heterotetramer; composed of 2 small (Mocs2A) and 2 large (Mocs2B) subunits.

It localises to the cytoplasm. The enzyme catalyses 2 [molybdopterin-synthase sulfur-carrier protein]-C-terminal-Gly-aminoethanethioate + cyclic pyranopterin phosphate + H2O = molybdopterin + 2 [molybdopterin-synthase sulfur-carrier protein]-C-terminal Gly-Gly + 2 H(+). Its pathway is cofactor biosynthesis; molybdopterin biosynthesis. In terms of biological role, catalytic subunit of the molybdopterin synthase complex, a complex that catalyzes the conversion of precursor Z into molybdopterin. Acts by mediating the incorporation of 2 sulfur atoms from thiocarboxylated Mocs2A into precursor Z to generate a dithiolene group. The chain is Molybdopterin synthase catalytic subunit from Drosophila persimilis (Fruit fly).